The following is a 385-amino-acid chain: Prophage integrase IntS (385 aa).

The region spanning 91–172 is the Core-binding (CB) domain; that stretch reads NSFSAIYKEW…RCGEVFRYAI (82 aa). Positions 195–373 constitute a Tyr recombinase domain; that stretch reads KNFPFLPADQ…QYLDKRREMM (179 aa). Active-site residues include R234, K261, H324, R327, and H350. Y360 acts as the O-(3'-phospho-DNA)-tyrosine intermediate in catalysis.

This sequence belongs to the 'phage' integrase family.

Its function is as follows. Integrase is necessary for integration of the phage into the host genome by site-specific recombination. In conjunction with excisionase, integrase is also necessary for excision of the prophage from the host genome. The polypeptide is Prophage integrase IntS (intS) (Escherichia coli (strain K12)).